We begin with the raw amino-acid sequence, 64 residues long: Large ribosomal subunit protein bL35 (64 aa).

This sequence belongs to the bacterial ribosomal protein bL35 family.

This is Large ribosomal subunit protein bL35 from Shewanella frigidimarina (strain NCIMB 400).